The chain runs to 325 residues: Biotin synthase (325 aa).

A Radical SAM core domain is found at 49 to 279 (VGDKVELCSI…DKNIRYAGGR (231 aa)). 3 residues coordinate [4Fe-4S] cluster: C66, C70, and C73. Residues C144, C204, and R274 each contribute to the [2Fe-2S] cluster site.

The protein belongs to the radical SAM superfamily. Biotin synthase family. In terms of assembly, homodimer. It depends on [4Fe-4S] cluster as a cofactor. [2Fe-2S] cluster is required as a cofactor.

It catalyses the reaction (4R,5S)-dethiobiotin + (sulfur carrier)-SH + 2 reduced [2Fe-2S]-[ferredoxin] + 2 S-adenosyl-L-methionine = (sulfur carrier)-H + biotin + 2 5'-deoxyadenosine + 2 L-methionine + 2 oxidized [2Fe-2S]-[ferredoxin]. Its pathway is cofactor biosynthesis; biotin biosynthesis; biotin from 7,8-diaminononanoate: step 2/2. Catalyzes the conversion of dethiobiotin (DTB) to biotin by the insertion of a sulfur atom into dethiobiotin via a radical-based mechanism. The protein is Biotin synthase of Carboxydothermus hydrogenoformans (strain ATCC BAA-161 / DSM 6008 / Z-2901).